The sequence spans 271 residues: Orotidine 5'-phosphate decarboxylase (271 aa).

The active-site Proton donor is the K95.

This sequence belongs to the OMP decarboxylase family. Type 2 subfamily.

It catalyses the reaction orotidine 5'-phosphate + H(+) = UMP + CO2. It participates in pyrimidine metabolism; UMP biosynthesis via de novo pathway; UMP from orotate: step 2/2. In Ralstonia nicotianae (strain ATCC BAA-1114 / GMI1000) (Ralstonia solanacearum), this protein is Orotidine 5'-phosphate decarboxylase (pyrF).